Reading from the N-terminus, the 341-residue chain is Follistatin (341 aa).

An N-terminal signal peptide occupies residues 1–29 (MLNERIQPGMIFLLTVSLCHFMEYRAVQA). Residues 30 to 103 (GNCWLQQSKN…TCENVDCGPG (74 aa)) form the TB domain. 8 disulfide bridges follow: C32-C55, C42-C88, C56-C91, C95-C106, C100-C116, C118-C150, C122-C143, and C132-C164. An N-linked (GlcNAc...) asparagine glycan is attached at N72. Residues 94–117 (TCENVDCGPGKKCKMNKKNKPRCV) enclose the Follistatin-like 1 domain. 3 Kazal-like domains span residues 100–166 (CGPG…KCKK), 186–241 (NAYC…KCIK), and 264–318 (RGRC…SCNS). Residue N124 is glycosylated (N-linked (GlcNAc...) asparagine). Positions 167–190 (TCRDVLCPGSSSCVVDQTNNAYCV) constitute a Follistatin-like 2 domain. Disulfide bonds link C192–C225, C196–C218, and C207–C239. The Follistatin-like 3 domain occupies 244–268 (SCEDIQCSAGKKCLWDSRVGRGRCA). Intrachain disulfides connect C270–C302, C274–C295, and C284–C316. N-linked (GlcNAc...) asparagine glycosylation occurs at N288. Residues 321 to 333 (EDTEEEEEEEEPD) are compositionally biased toward acidic residues. Positions 321 to 341 (EDTEEEEEEEEPDYSFVISSW) are disordered.

In terms of assembly, monomer. In terms of tissue distribution, spemann organizer and notochord.

Its subcellular location is the secreted. Functionally, binds directly to activin and functions as an activin antagonist which plays a role in neural induction. The short isoform is a more potent inhibitor of activin than the long isoform. Specific inhibitor of the biosynthesis and secretion of pituitary follicle stimulating hormone (FSH). The protein is Follistatin (fst) of Xenopus laevis (African clawed frog).